Here is a 193-residue protein sequence, read N- to C-terminus: Potassium-transporting ATPase KdpC subunit (193 aa).

Residues 14 to 34 (ITFTFLVLCGLVYPLIVTGIA) form a helical membrane-spanning segment.

This sequence belongs to the KdpC family. The system is composed of three essential subunits: KdpA, KdpB and KdpC.

The protein localises to the cell membrane. Its function is as follows. Part of the high-affinity ATP-driven potassium transport (or Kdp) system, which catalyzes the hydrolysis of ATP coupled with the electrogenic transport of potassium into the cytoplasm. This subunit acts as a catalytic chaperone that increases the ATP-binding affinity of the ATP-hydrolyzing subunit KdpB by the formation of a transient KdpB/KdpC/ATP ternary complex. This Bacillus cereus (strain ATCC 14579 / DSM 31 / CCUG 7414 / JCM 2152 / NBRC 15305 / NCIMB 9373 / NCTC 2599 / NRRL B-3711) protein is Potassium-transporting ATPase KdpC subunit.